The primary structure comprises 359 residues: tRNA/tmRNA (uracil-C(5))-methyltransferase (359 aa).

Q183, Y211, N216, E232, and D292 together coordinate S-adenosyl-L-methionine. C317 functions as the Nucleophile in the catalytic mechanism. The active-site Proton acceptor is the E351.

The protein belongs to the class I-like SAM-binding methyltransferase superfamily. RNA M5U methyltransferase family. TrmA subfamily.

It catalyses the reaction uridine(54) in tRNA + S-adenosyl-L-methionine = 5-methyluridine(54) in tRNA + S-adenosyl-L-homocysteine + H(+). The catalysed reaction is uridine(341) in tmRNA + S-adenosyl-L-methionine = 5-methyluridine(341) in tmRNA + S-adenosyl-L-homocysteine + H(+). Dual-specificity methyltransferase that catalyzes the formation of 5-methyluridine at position 54 (m5U54) in all tRNAs, and that of position 341 (m5U341) in tmRNA (transfer-mRNA). The chain is tRNA/tmRNA (uracil-C(5))-methyltransferase from Pseudomonas fluorescens (strain SBW25).